The primary structure comprises 911 residues: Probable dipeptidyl-aminopeptidase B (911 aa).

A disordered region spans residues 1–39 (MPRPRAAKEEETELLAQHQESPRPSSDGSEASASSISTT). The Cytoplasmic segment spans residues 1 to 97 (MPRPRAAKEE…TPVDKKARRT (97 aa)). Low complexity predominate over residues 25–39 (SSDGSEASASSISTT). The helical; Signal-anchor for type II membrane protein transmembrane segment at 98-118 (LWIVGTICAVGWALALVSFLM) threads the bilayer. Residues 119 to 911 (NGNYKHSSTR…AQADARSLGR (793 aa)) lie on the Vacuolar side of the membrane. Residues Asn268 and Asn564 are each glycosylated (N-linked (GlcNAc...) asparagine). The Charge relay system role is filled by Ser755. Asn809 is a glycosylation site (N-linked (GlcNAc...) asparagine). Residues Asp832 and His865 each act as charge relay system in the active site.

Belongs to the peptidase S9B family.

It is found in the vacuole membrane. It carries out the reaction Release of an N-terminal dipeptide, Xaa-Yaa-|-Zaa-, from a polypeptide, preferentially when Yaa is Pro, provided Zaa is neither Pro nor hydroxyproline.. In terms of biological role, type IV dipeptidyl-peptidase which removes N-terminal dipeptides sequentially from polypeptides having unsubstituted N-termini provided that the penultimate residue is proline. This chain is Probable dipeptidyl-aminopeptidase B (DAPB), found in Phaeosphaeria nodorum (strain SN15 / ATCC MYA-4574 / FGSC 10173) (Glume blotch fungus).